The sequence spans 410 residues: Lissencephaly-1 homolog (410 aa).

The LisH domain maps to 7 to 39; the sequence is QQEELQLAVHAYLVEAGHAEAAAAMAKSANLGD. Residues 55–80 are a coiled coil; it reads TTITRLQKRNMELQAEVEELRSSARA. 7 WD repeats span residues 104–143, 146–185, 188–227, 230–269, 294–333, 336–375, and 378–410; these read GHRLPITAVAIHPSFAVMASASEDASIKLWDMESGNFERS, GHTNAVNDIAYDREGNRLVSCSTDMTIKVWNMDNFTCTKT, GHDHTVSSVRFDHTGDRVFSASRDKTIKIWELATGYCLQT, GHSDWVRSIDVSADGAWICSASSDHTVRVWSVASGECKHV, MIFGSKPSAEAASKGPFVASASRDKSICLFDVSTGQHLAR, GHDNWVRATAWSRGGRYLFSVADDKTMRVWDIATKRVSKT, and AHNHFVSCIAVHAKNTHVVTGSVDLKVKVWECN.

The protein belongs to the WD repeat LIS1/nudF family.

It localises to the cytoplasm. The protein localises to the cytoskeleton. It is found in the microtubule organizing center. Its subcellular location is the centrosome. Its function is as follows. Positively regulates the activity of the minus-end directed microtubule motor protein dynein. May enhance dynein-mediated microtubule sliding by targeting dynein to the microtubule plus end. Required for several dynein- and microtubule-dependent processes. The sequence is that of Lissencephaly-1 homolog from Monosiga brevicollis (Choanoflagellate).